Here is a 366-residue protein sequence, read N- to C-terminus: Sodium-potassium/proton antiporter ChaA (366 aa).

Topologically, residues 1 to 16 (MSNAQEAVKTRHKETS) are cytoplasmic. Transmembrane regions (helical) follow at residues 17-37 (LIFPVLALVVLFLWGSSQTLP) and 38-58 (VVIAINLLALIGILSSAFSVV). The Cytoplasmic portion of the chain corresponds to 59-74 (RHADVLAHRLGEPYGS). Residues 75-95 (LILSLSVVILEVSLISALMAT) form a helical membrane-spanning segment. The Periplasmic portion of the chain corresponds to 96–106 (GDAAPTLMRDT). Residues 107 to 127 (LYSIIMIVTGGLVGFSLLLGG) traverse the membrane as a helical segment. At 128–143 (RKFATQYMNLFGIKQY) the chain is on the cytoplasmic side. A helical membrane pass occupies residues 144 to 164 (LIALFPLAIIVLVFPMALPAA). Over 165–167 (NFS) the chain is Periplasmic. A helical membrane pass occupies residues 168–188 (TGQALLVALISAAMYGVFLLI). Residues 189-216 (QTKTHQSLFVYEHEDDSDDDDPHHGKPS) are Cytoplasmic-facing. A helical transmembrane segment spans residues 217–237 (AHSSLWHAIWLIIHLIAVIAV). Residues 238–255 (TKMNASSLETLLDSMNAP) lie on the Periplasmic side of the membrane. A helical transmembrane segment spans residues 256-276 (VAFTGFLVALLILSPEGLGAL). Topologically, residues 277–290 (KAVLNNQVQRAMNL) are cytoplasmic. The helical transmembrane segment at 291-311 (FFGSVLATISLTVPVVTLIAF) threads the bilayer. The Periplasmic segment spans residues 312–318 (MTGNELQ). Residues 319-339 (FALGAPEMVVMVASLVLCHIS) traverse the membrane as a helical segment. The Cytoplasmic portion of the chain corresponds to 340–345 (FSTGRT). Residues 346-366 (NVLNGAAHLALFAAYLMTIFA) traverse the membrane as a helical segment.

The protein belongs to the Ca(2+):cation antiporter (CaCA) (TC 2.A.19) family.

The protein resides in the cell inner membrane. The catalysed reaction is Na(+)(in) + H(+)(out) = Na(+)(out) + H(+)(in). It catalyses the reaction K(+)(in) + H(+)(out) = K(+)(out) + H(+)(in). It carries out the reaction Ca(2+)(in) + H(+)(out) = Ca(2+)(out) + H(+)(in). Pronounced pH dependence with sodium as substrate. Ca(2+)/H(+) and Na(+)/H(+) antiporter activities are both inhibited by magnesium. Ca(2+)/H(+) activity is inhibited by the proton ionophore carbonyl cyanide m-chlorophenylhydrazone (CCCP). In terms of biological role, sodium exporter that functions mainly at alkaline pH. Can also function as a potassium/proton and calcium/proton antiporter at alkaline pH. Does not play a major role in calcium export. The K(+)/H(+) antiporter activity may enable E.coli to adapt to K(+) salinity stress and to maintain K(+) homeostasis. The sequence is that of Sodium-potassium/proton antiporter ChaA from Escherichia coli (strain K12).